Reading from the N-terminus, the 505-residue chain is Succinyl-CoA:acetate CoA-transferase (505 aa).

269 to 273 (GVGNV) lines the CoA pocket. The active-site 5-glutamyl coenzyme A thioester intermediate is the E294. CoA contacts are provided by I364, N384, G388, and K408.

It belongs to the acetyl-CoA hydrolase/transferase family. In terms of assembly, homodimer.

The catalysed reaction is succinyl-CoA + acetate = succinate + acetyl-CoA. Its pathway is metabolic intermediate biosynthesis; acetyl-CoA biosynthesis. Its activity is regulated as follows. Subject to competitive inhibition by coenzyme A (CoA). Utilizes succinyl-CoA to convert toxic acetate to acetyl-CoA and succinate. Required for growth on acetic acid and for resistance to high levels of acetic acid. Also has low activity with acetoacetate as substrate. This Acetobacter aceti protein is Succinyl-CoA:acetate CoA-transferase.